A 191-amino-acid chain; its full sequence is CASP-like protein 2U4 (191 aa).

Residues 1 to 25 (MGAYDGAEAPRAAPASTAANSRPSR) are Cytoplasmic-facing. The helical transmembrane segment at 26–46 (LLLLHSLLLRLVAVVLSILVI) threads the bilayer. Topologically, residues 47-68 (AVMVHAKQRVMIFKAEWDNSKA) are extracellular. A helical transmembrane segment spans residues 69-89 (FVALVTISAICLGYSFLQFIL). Topologically, residues 90–114 (SAFHLCSKSWKSPTKCWAWMNFIAD) are cytoplasmic. A helical membrane pass occupies residues 115–135 (QILTYAMLGAAAAAAELAYIA). Over 136–157 (KNGSSRAQWQPICSTFNTFCTR) the chain is Extracellular. An N-linked (GlcNAc...) asparagine glycan is attached at Asn-137. Residues 158-178 (AGASIILSFIAVLALANSSAI) form a helical membrane-spanning segment. Residues 179-191 (SAYHLFRRPSSSV) lie on the Cytoplasmic side of the membrane.

This sequence belongs to the Casparian strip membrane proteins (CASP) family. Homodimer and heterodimers.

Its subcellular location is the cell membrane. This Selaginella moellendorffii (Spikemoss) protein is CASP-like protein 2U4.